A 126-amino-acid polypeptide reads, in one-letter code: Small ribosomal subunit protein uS12 (126 aa).

Residues 1-26 (MPTINQLVRKGRASETTKSKSPALQD) form a disordered region. At Asp-89 the chain carries 3-methylthioaspartic acid. The tract at residues 101 to 126 (SLDTQGVKDRKQARSKYGAKRAKAAK) is disordered. The segment covering 113-126 (ARSKYGAKRAKAAK) has biased composition (basic residues).

This sequence belongs to the universal ribosomal protein uS12 family. Part of the 30S ribosomal subunit. Contacts proteins S8 and S17. May interact with IF1 in the 30S initiation complex.

With S4 and S5 plays an important role in translational accuracy. In terms of biological role, interacts with and stabilizes bases of the 16S rRNA that are involved in tRNA selection in the A site and with the mRNA backbone. Located at the interface of the 30S and 50S subunits, it traverses the body of the 30S subunit contacting proteins on the other side and probably holding the rRNA structure together. The combined cluster of proteins S8, S12 and S17 appears to hold together the shoulder and platform of the 30S subunit. This Burkholderia pseudomallei (strain 1106a) protein is Small ribosomal subunit protein uS12.